A 153-amino-acid chain; its full sequence is Lipoprotein signal peptidase (153 aa).

A run of 3 helical transmembrane segments spans residues 6 to 26 (IVAVIVLLLIGLDQLVKSYIV), 60 to 80 (QQLLFAVITLVVVIGAIWYLH), and 85 to 105 (DSFWMVLGLTLIIAGGLGNFI). Residues Asp115 and Asp131 contribute to the active site. The chain crosses the membrane as a helical span at residues 124–144 (FAIFNVADSYLTVGVIILLIA).

This sequence belongs to the peptidase A8 family.

The protein resides in the cell membrane. The catalysed reaction is Release of signal peptides from bacterial membrane prolipoproteins. Hydrolyzes -Xaa-Yaa-Zaa-|-(S,diacylglyceryl)Cys-, in which Xaa is hydrophobic (preferably Leu), and Yaa (Ala or Ser) and Zaa (Gly or Ala) have small, neutral side chains.. It participates in protein modification; lipoprotein biosynthesis (signal peptide cleavage). This protein specifically catalyzes the removal of signal peptides from prolipoproteins. The polypeptide is Lipoprotein signal peptidase (Streptococcus pneumoniae (strain ATCC BAA-255 / R6)).